Consider the following 379-residue polypeptide: Succinyl-diaminopimelate desuccinylase (379 aa).

Residue H70 participates in Zn(2+) binding. The active site involves D72. D103 is a Zn(2+) binding site. E137 (proton acceptor) is an active-site residue. 3 residues coordinate Zn(2+): E138, E166, and H352.

This sequence belongs to the peptidase M20A family. DapE subfamily. As to quaternary structure, homodimer. Zn(2+) is required as a cofactor. It depends on Co(2+) as a cofactor.

The catalysed reaction is N-succinyl-(2S,6S)-2,6-diaminopimelate + H2O = (2S,6S)-2,6-diaminopimelate + succinate. It functions in the pathway amino-acid biosynthesis; L-lysine biosynthesis via DAP pathway; LL-2,6-diaminopimelate from (S)-tetrahydrodipicolinate (succinylase route): step 3/3. Its function is as follows. Catalyzes the hydrolysis of N-succinyl-L,L-diaminopimelic acid (SDAP), forming succinate and LL-2,6-diaminopimelate (DAP), an intermediate involved in the bacterial biosynthesis of lysine and meso-diaminopimelic acid, an essential component of bacterial cell walls. In Burkholderia mallei (strain NCTC 10247), this protein is Succinyl-diaminopimelate desuccinylase.